A 148-amino-acid polypeptide reads, in one-letter code: MFDVTLLILLGLAALGFISHNTTVAVSILVLIIVRVTPLNTFFPWIEKQGLTVGIIILTIGVMAPIASGSLPPSTLIHSFVNWKSLVAIAIGVFVSWLGGRGVTLMGSQPQLVAGLLVGTVLGVALFRGVPVGPLIAAGLVSLIIGKQ.

A run of 4 helical transmembrane segments spans residues 14–34, 51–71, 86–106, and 121–141; these read ALGF…LIIV, LTVG…SGSL, LVAI…VTLM, and VLGV…AGLV.

It belongs to the UPF0756 family.

It localises to the cell membrane. The protein is UPF0756 membrane protein CKO_01811 of Citrobacter koseri (strain ATCC BAA-895 / CDC 4225-83 / SGSC4696).